We begin with the raw amino-acid sequence, 267 residues long: tRNA pseudouridine synthase A (267 aa).

The active-site Nucleophile is the Asp51. Tyr109 contributes to the substrate binding site.

The protein belongs to the tRNA pseudouridine synthase TruA family. Homodimer.

It carries out the reaction uridine(38/39/40) in tRNA = pseudouridine(38/39/40) in tRNA. In terms of biological role, formation of pseudouridine at positions 38, 39 and 40 in the anticodon stem and loop of transfer RNAs. This Staphylococcus epidermidis (strain ATCC 12228 / FDA PCI 1200) protein is tRNA pseudouridine synthase A.